The primary structure comprises 76 residues: Conotoxin Gla(1)-TxVI (76 aa).

The signal sequence occupies residues 1–19 (MEKLTILLLVAAVLMSTQA). The propeptide occupies 20-45 (LVERAGENHSKENINFLLKRKRAADR). A 6'-bromotryptophan modification is found at tryptophan 48. Glutamate 50 carries the 4-carboxyglutamate modification. 3 disulfide bridges follow: cysteine 51–cysteine 65, cysteine 58–cysteine 69, and cysteine 64–cysteine 73. Proline 61 bears the 4-hydroxyproline mark. Residues glutamate 63, glutamate 67, and glutamate 70 each carry the 4-carboxyglutamate modification. At tryptophan 76 the chain carries 6'-bromotryptophan.

In terms of tissue distribution, expressed by the venom duct.

It localises to the secreted. In Conus textile (Cloth-of-gold cone), this protein is Conotoxin Gla(1)-TxVI.